The primary structure comprises 152 residues: UPF0266 membrane protein YobD (152 aa).

3 helical membrane-spanning segments follow: residues 6–26, 45–65, and 67–87; these read LVLI…QFIM, VDSV…VTSH, and AQMT…IFWI.

It belongs to the UPF0266 family.

It is found in the cell inner membrane. The polypeptide is UPF0266 membrane protein YobD (Salmonella choleraesuis (strain SC-B67)).